Consider the following 69-residue polypeptide: Cecropin-like peptide 1 (69 aa).

A signal peptide spans 1–23; sequence MNFTKLFVVFAVVLVAFAGQSEA. The residue at position 68 (glutamine 68) is a Glutamine amide.

In terms of tissue distribution, following bacterial infection, expressed in fat body, trachea and muscle.

The protein localises to the secreted. In terms of biological role, antimicrobial peptide active against Gram-negative bacteria E.coli KCCM 11234 (MIC&lt;=1.03 uM), E.aerogenes KCCM 12177 (MIC&lt;=2.07 uM) and P.aeruginosa KCCM 11328 (MIC&lt;=2.07 uM). Not active against various Gram-positive bacteria at concentrations up to 4.14 uM. This is Cecropin-like peptide 1 from Hermetia illucens (Black soldier fly).